The chain runs to 279 residues: NADPH-dependent 7-cyano-7-deazaguanine reductase (279 aa).

86–88 provides a ligand contact to substrate; sequence IES. Position 88–89 (88–89) interacts with NADPH; sequence SK. Catalysis depends on cysteine 187, which acts as the Thioimide intermediate. Aspartate 194 (proton donor) is an active-site residue. 226–227 is a binding site for substrate; it reads HE. Residue 255–256 coordinates NADPH; that stretch reads RG.

It belongs to the GTP cyclohydrolase I family. QueF type 2 subfamily. In terms of assembly, homodimer.

The protein resides in the cytoplasm. The catalysed reaction is 7-aminomethyl-7-carbaguanine + 2 NADP(+) = 7-cyano-7-deazaguanine + 2 NADPH + 3 H(+). Its pathway is tRNA modification; tRNA-queuosine biosynthesis. Catalyzes the NADPH-dependent reduction of 7-cyano-7-deazaguanine (preQ0) to 7-aminomethyl-7-deazaguanine (preQ1). This chain is NADPH-dependent 7-cyano-7-deazaguanine reductase, found in Histophilus somni (strain 129Pt) (Haemophilus somnus).